Here is a 598-residue protein sequence, read N- to C-terminus: MNERIKNKLALLPDQPGCYLMKDKNGTIIYVGKAKILKNRVRSYFRGSHDTKTERLVSEIDDFEYIVTESNIEALLLEINLIHKNNPKYNIMLKDDKTYPFIKITNEKYPRLMITRKVLKDKALYFGPYPDVNAANETKKLLDRLFPLRKCNPSQKTPCLYYHLGQCLCPYAFDVDPQVYKDMVEEIKGFLSGGHTEIQDRLQEKMAYAAAHMEFEKAAEFRDQIKAIETVMTRQKMTNVDLIDRDVFGYAVDKGWMCVQVFFVRQGKLIERDVSIFPFYDDASEAFLTFIGQFYQENEHFVPKEVLIPDDIDKESVEALLATKVLQPQRGEKKKLVKLASKNAAVALNEKFDLIVRKQERTIGAVEKLGNAMNIPAPIRIEAFDNSNIMGTNPVSAMVVFIDGRPAKNEYRKYKIKTVQGPDDYASMREVIYRRYSRVLKEGLPFPDLILIDGGKGQVDVAKDVLANQLGVDIPVAGLAKNDKHKTSELLFGPNLEVVPLERNSQEFFLLQRIQDEVHRFAITFHRQLRSKNSFASKLDNIEGLGPKRKKNLLKEFKSLKNITAASVEELRKAGLPETVAKNVYRHLHQETTSEIEK.

The 78-residue stretch at aspartate 14–isoleucine 91 folds into the GIY-YIG domain. Residues threonine 196–valine 231 enclose the UVR domain.

This sequence belongs to the UvrC family. In terms of assembly, interacts with UvrB in an incision complex.

Its subcellular location is the cytoplasm. Functionally, the UvrABC repair system catalyzes the recognition and processing of DNA lesions. UvrC both incises the 5' and 3' sides of the lesion. The N-terminal half is responsible for the 3' incision and the C-terminal half is responsible for the 5' incision. This is UvrABC system protein C from Enterococcus faecalis (strain ATCC 700802 / V583).